Reading from the N-terminus, the 275-residue chain is Seminase (275 aa).

The signal sequence occupies residues 1–19 (MKRLLFLFLLAGILINNHA). Asparagine 23 carries N-linked (GlcNAc...) asparagine glycosylation. The 225-residue stretch at 44-268 (VIGGRVTTNA…VKPFIVKGIK (225 aa)) folds into the Peptidase S1 domain. A disulfide bond links cysteine 70 and cysteine 86. Catalysis depends on charge relay system residues histidine 85 and aspartate 131. 2 disulfides stabilise this stretch: cysteine 194–cysteine 210 and cysteine 220–cysteine 244. The active-site Charge relay system is the serine 224.

This sequence belongs to the peptidase S1 family. In terms of processing, undergoes cleavage in the male during mating with a cleaved product detected in the ejaculatory duct and/or bulb of males by 8-10 minutes after the start of mating. Further cleavage occurs in the mated female. Produced in the male accessory glands and secreted into seminal fluid.

It is found in the secreted. Its function is as follows. Seminal fluid protease which is required for cleavage and probably also activation of the metalloprotease Semp1. Also required for a number of female post-mating responses independent of Semp1 including egg laying and sperm usage. This Drosophila melanogaster (Fruit fly) protein is Seminase.